A 258-amino-acid polypeptide reads, in one-letter code: Hydroxyethylthiazole kinase (258 aa).

Methionine 37 serves as a coordination point for substrate. Arginine 112 and threonine 158 together coordinate ATP. Position 185 (alanine 185) interacts with substrate.

The protein belongs to the Thz kinase family. Mg(2+) is required as a cofactor.

It carries out the reaction 5-(2-hydroxyethyl)-4-methylthiazole + ATP = 4-methyl-5-(2-phosphooxyethyl)-thiazole + ADP + H(+). It functions in the pathway cofactor biosynthesis; thiamine diphosphate biosynthesis; 4-methyl-5-(2-phosphoethyl)-thiazole from 5-(2-hydroxyethyl)-4-methylthiazole: step 1/1. In terms of biological role, catalyzes the phosphorylation of the hydroxyl group of 4-methyl-5-beta-hydroxyethylthiazole (THZ). The polypeptide is Hydroxyethylthiazole kinase (Rhizobium etli (strain CIAT 652)).